A 134-amino-acid chain; its full sequence is Cytochrome b5 (134 aa).

Residue Ala2 is modified to N-acetylalanine. Residues Lys7, Lys10, and Lys19 each carry the N6-acetyllysine modification. The region spanning 9-85 (VKYYTLEEIQ…SKTFIIGELH (77 aa)) is the Cytochrome b5 heme-binding domain. Residues His44 and His68 each contribute to the heme site. A helical transmembrane segment spans residues 109–131 (WWTNWLIPAISALFVALIYHLYT).

It belongs to the cytochrome b5 family.

Its subcellular location is the endoplasmic reticulum membrane. It is found in the microsome membrane. Its function is as follows. Cytochrome b5 is a membrane-bound hemoprotein functioning as an electron carrier for several membrane-bound oxygenases. The sequence is that of Cytochrome b5 (CYB5A) from Bos taurus (Bovine).